Consider the following 894-residue polypeptide: GTPase-activating protein GYP5 (894 aa).

A compositionally biased stretch (basic and acidic residues) spans 1-23 (MSSDKSIEKNTDTIASEVHEGDN). Residues 1–324 (MSSDKSIEKN…VPPPLEEEMK (324 aa)) are disordered. Residues Ser-25 and Ser-30 each carry the phosphoserine modification. At Thr-89 the chain carries Phosphothreonine. Positions 134–164 (IEKEYDAVKENEKVYADTKEVVSSPENREVT) are enriched in basic and acidic residues. 2 stretches are compositionally biased toward polar residues: residues 184–200 (GTTT…SSEV) and 268–279 (SSENEVSAIPTT). Ser-389 bears the Phosphoserine mark. One can recognise a Rab-GAP TBC domain in the interval 451–630 (GIPPQIRGII…RIFDIVFVEG (180 aa)). Positions 732-872 (EKEQKKEDHY…INKEQVSTAS (141 aa)) form a coiled coil.

This sequence belongs to the GYP5 family. Interacts with GYL1 and RVS167; and is part of SEC4-containing complexes.

The protein localises to the cytoplasm. It is found in the bud. Its subcellular location is the bud neck. Functionally, GTPase-activating protein which accelerates the GTP hydrolysis rate of YPT1 and SEC4. Involved in ER to Golgi trafficking and polarized exocytosis. This chain is GTPase-activating protein GYP5 (GYP5), found in Saccharomyces cerevisiae (strain ATCC 204508 / S288c) (Baker's yeast).